Consider the following 200-residue polypeptide: Probable GTP-binding protein EngB (200 aa).

One can recognise an EngB-type G domain in the interval 24–199 (EGAEVAFAGR…RGVIGGWLGL (176 aa)). GTP-binding positions include 32–39 (GRSNAGKS), 59–63 (GRTQQ), 77–80 (DLPG), 144–147 (TKAD), and 178–180 (FSG). 2 residues coordinate Mg(2+): S39 and T61.

It belongs to the TRAFAC class TrmE-Era-EngA-EngB-Septin-like GTPase superfamily. EngB GTPase family. Requires Mg(2+) as cofactor.

Its function is as follows. Necessary for normal cell division and for the maintenance of normal septation. The polypeptide is Probable GTP-binding protein EngB (Stenotrophomonas maltophilia (strain K279a)).